The following is a 94-amino-acid chain: Large ribosomal subunit protein uL23 (94 aa).

The protein belongs to the universal ribosomal protein uL23 family. As to quaternary structure, part of the 50S ribosomal subunit. Contacts protein L29, and trigger factor when it is bound to the ribosome.

Its function is as follows. One of the early assembly proteins it binds 23S rRNA. One of the proteins that surrounds the polypeptide exit tunnel on the outside of the ribosome. Forms the main docking site for trigger factor binding to the ribosome. This chain is Large ribosomal subunit protein uL23, found in Listeria innocua serovar 6a (strain ATCC BAA-680 / CLIP 11262).